Consider the following 361-residue polypeptide: MTATWSVNKKIFLQNAITVKNNQPLMAVVKNNAYHYDLEFAVTQFIHAGIDTFSTTSLREAIQIRQLAPDATIFLMNAVYEFDLVREHQIHMTLPSLTYYYNHKNDLAGIHVHLEFENLLHRSGFKDLNEIKEVLKDHHHNQNAKMIISGLWTHFGYADEFDVSDYNVERSQWMEIVEALLSEGYQFDLIHAQNSASFYREGQILLPHHTHARVGIALYGSRPYSSLNQHDIVQSLTLKAHVIQVREVQAGDYCGYSFAFEVTKNNTKLAVVDIGYGDGILRTRAKHEALINGKRYPIRALMMSHMFVEVDGNVHAQDEVILYNNDIRIDEYTFKGVGANSEQLSAMNHDSLKKEYISNDC.

Lys30 functions as the Proton acceptor; specific for D-alanine in the catalytic mechanism. The residue at position 30 (Lys30) is an N6-(pyridoxal phosphate)lysine. Arg122 contributes to the substrate binding site. Tyr256 serves as the catalytic Proton acceptor; specific for L-alanine. Met303 contributes to the substrate binding site.

This sequence belongs to the alanine racemase family. The cofactor is pyridoxal 5'-phosphate.

It catalyses the reaction L-alanine = D-alanine. The protein operates within amino-acid biosynthesis; D-alanine biosynthesis; D-alanine from L-alanine: step 1/1. Catalyzes the interconversion of L-alanine and D-alanine. May also act on other amino acids. In Staphylococcus aureus (strain COL), this protein is Alanine racemase 2 (alr2).